The following is a 387-amino-acid chain: Cysteine desulfurase (387 aa).

Pyridoxal 5'-phosphate is bound by residues 72–73, N152, Q180, and 200–202; these read GT and SAH. Residue K203 is modified to N6-(pyridoxal phosphate)lysine. T238 contributes to the pyridoxal 5'-phosphate binding site. Catalysis depends on C323, which acts as the Cysteine persulfide intermediate. [2Fe-2S] cluster is bound at residue C323.

The protein belongs to the class-V pyridoxal-phosphate-dependent aminotransferase family. NifS/IscS subfamily. As to quaternary structure, homodimer. Pyridoxal 5'-phosphate serves as cofactor.

The catalysed reaction is (sulfur carrier)-H + L-cysteine = (sulfur carrier)-SH + L-alanine. In terms of biological role, catalyzes the removal of elemental sulfur atoms from cysteine to produce alanine. Seems to participate in the biosynthesis of the nitrogenase metalloclusters by providing the inorganic sulfur required for the Fe-S core formation. The polypeptide is Cysteine desulfurase (Cereibacter sphaeroides (Rhodobacter sphaeroides)).